We begin with the raw amino-acid sequence, 307 residues long: MAESNADVYASFGVNSAVMSGGSVEEHEQNMLALDVAARDGDDAIELASDEVETERDLYDNSDPFGQEDDEGRIQVRIGDGSEPTDVDTGEEGVEGTEGSEEFTPLGETPEELVAASEQLGEHEEGFQEMINIAAERGMSVETIEAIQREYEENEELSAESYAKLAEIGYTKAFIDSYIRGQEALVEQYVNSVIEYAGGRERFDALYNHLETHNPEAAQSLDNALTNRDLATVKAIINLAGESRAKAFGRKPTRSVTNRAIPAKPQATKREGFADRSEMIKAMSDPRYRTDANYRRQVEQKVIDSNF.

2 stretches are compositionally biased toward acidic residues: residues 45-54 and 83-101; these read IELASDEVET and EPTD…EGSE. Positions 45-105 are disordered; that stretch reads IELASDEVET…GTEGSEEFTP (61 aa).

Belongs to the T7likevirus capsid assembly scaffolding protein family.

Functionally, scaffolding protein involved in the icosahedric procapsid assembly. Coassembles with the capsid proteins to form the procapsid, in which the scaffolding protein is found within the external shell of icosahedrally arranged capsid protein subunits. In a subsequent step the scaffolding protein molecules are released from the procapsid. Facilitates assembly by binding to gp10 hexamers but not the pentamers and locking them into a morphogenically correct conformation. The sequence is that of Capsid assembly scaffolding protein from Escherichia coli (Bacteriophage T7).